A 345-amino-acid polypeptide reads, in one-letter code: Phosphate acyltransferase (345 aa).

It belongs to the PlsX family. As to quaternary structure, homodimer. Probably interacts with PlsY.

It is found in the cytoplasm. It carries out the reaction a fatty acyl-[ACP] + phosphate = an acyl phosphate + holo-[ACP]. It participates in lipid metabolism; phospholipid metabolism. Functionally, catalyzes the reversible formation of acyl-phosphate (acyl-PO(4)) from acyl-[acyl-carrier-protein] (acyl-ACP). This enzyme utilizes acyl-ACP as fatty acyl donor, but not acyl-CoA. The sequence is that of Phosphate acyltransferase from Wolbachia sp. subsp. Drosophila simulans (strain wRi).